A 448-amino-acid chain; its full sequence is MREVISIHVGQAGVQIGNACWELYCLEHGIQPDGTMPTQSTNEGESFTTFFSDTGSGRYVPRSIFVDLEPTVVDEIRTGTYKKLFHPEQMITGKEDAANNYARGHYTVGKELIDTVLDRIRRLADNCSGLQGFFVFHSFGGGTGSGFTSLLMERLSVDYGKKSKLEFSIYPAPQVSTAVVEPYNSILTTHTTLEHSDCAFMVDNEAIYDICRRNLDVERPSYTNLNRIISQVVSSITASLRFDGALNVDLNEFQTNLVPYPRIHFPLAAYTPLISAEKAYHEALSVSDITNSCFEPANQMVKCDPRHGKYMAVCLLYRGDVVPKDVNTAIAAIKTKRTIQFVDWCPTGFKVGINYQPPTVVPGGDLAKVPRAVCMLSNTTAIAEAWSRLDYKFDLMYAKRAFVHWYVGEGMEEGEFTEAREDLAALEKDYEEVGADSNEGGEEEGEEY.

8 residues coordinate GTP: glutamine 11, glutamate 69, serine 138, glycine 142, threonine 143, threonine 177, asparagine 204, and asparagine 226. Mg(2+) is bound at residue glutamate 69. Glutamate 252 is an active-site residue. Positions 428–448 (KDYEEVGADSNEGGEEEGEEY) are disordered. Positions 429–448 (DYEEVGADSNEGGEEEGEEY) are enriched in acidic residues.

Belongs to the tubulin family. In terms of assembly, dimer of alpha and beta chains. A typical microtubule is a hollow water-filled tube with an outer diameter of 25 nm and an inner diameter of 15 nM. Alpha-beta heterodimers associate head-to-tail to form protofilaments running lengthwise along the microtubule wall with the beta-tubulin subunit facing the microtubule plus end conferring a structural polarity. Microtubules usually have 13 protofilaments but different protofilament numbers can be found in some organisms and specialized cells. Requires Mg(2+) as cofactor. Undergoes a tyrosination/detyrosination cycle, the cyclic removal and re-addition of a C-terminal tyrosine residue. In terms of tissue distribution, expressed in intestine, pharyngeal muscle cells, and a subset of neurons.

The protein resides in the cytoplasm. It localises to the cytoskeleton. The catalysed reaction is GTP + H2O = GDP + phosphate + H(+). Tubulin is the major constituent of microtubules, a cylinder consisting of laterally associated linear protofilaments composed of alpha- and beta-tubulin heterodimers. Microtubules grow by the addition of GTP-tubulin dimers to the microtubule end, where a stabilizing cap forms. Below the cap, tubulin dimers are in GDP-bound state, owing to GTPase activity of alpha-tubulin. Required for the normal dynamic behavior of the non-centrosomal microtubules in the epidermal syncytium. Involved in the redistribution of microtubule end-binding protein EB1/ebp-2 caused by wounding. Required to modulate expression in the epidermis of antimicrobial peptides, such as nlp-29, after wounding, or fungal infection. The chain is Tubulin alpha-2 chain (tba-2) from Caenorhabditis elegans.